Consider the following 650-residue polypeptide: Pentatricopeptide repeat-containing protein At2g41080 (650 aa).

PPR repeat units lie at residues 43–77 (NTSL…GFSS), 78–112 (DKFI…NYMS), 114–139 (NILI…MPDR), 140–174 (KLTT…GFSP), 175–209 (DEYT…GLEL), 210–240 (DLVV…MPVR), 241–275 (NLVA…GCRP), 276–310 (NKIT…GASS), 311–341 (VVAV…REDE), 342–372 (DEVM…MAEQ), 378–413 (NEVA…GFKP), and 414–444 (GLKH…MPIK). The type E motif stretch occupies residues 449-524 (IWKTLLSACN…EAGISWFEHK (76 aa)). Residues 525 to 555 (GEVHQFKMGDRSQSKSKEIYSYLKELTLEMK) form a type E(+) motif region. Residues 556 to 650 (LKGYKPDTAS…NGKCSCGDYW (95 aa)) are type DYW motif.

Belongs to the PPR family. PCMP-H subfamily.

This chain is Pentatricopeptide repeat-containing protein At2g41080 (PCMP-H29), found in Arabidopsis thaliana (Mouse-ear cress).